The following is a 62-amino-acid chain: Chromatin protein Cren7 2 (62 aa).

It belongs to the Cren7 family. As to quaternary structure, monomer. Post-translationally, methylated at multiple sites, to varying extents.

It localises to the chromosome. It is found in the cytoplasm. In terms of biological role, a chromatin protein, binds double-stranded DNA without sequence specificity. Constrains negative DNA supercoils. The chain is Chromatin protein Cren7 2 (cren7-2) from Hyperthermus butylicus (strain DSM 5456 / JCM 9403 / PLM1-5).